A 455-amino-acid polypeptide reads, in one-letter code: Argininosuccinate lyase (455 aa).

This sequence belongs to the lyase 1 family. Argininosuccinate lyase subfamily.

It localises to the cytoplasm. It carries out the reaction 2-(N(omega)-L-arginino)succinate = fumarate + L-arginine. It functions in the pathway amino-acid biosynthesis; L-arginine biosynthesis; L-arginine from L-ornithine and carbamoyl phosphate: step 3/3. This chain is Argininosuccinate lyase, found in Shewanella sp. (strain MR-4).